Here is an 81-residue protein sequence, read N- to C-terminus: MRYNSFLSVLALFNVLLWFTFILAISMTFSAINLLMSKKFTMKNVQPTRLDWFFVLLPYVIGLFFAIFDSATIGQVFFWGA.

The N-terminal stretch at 1-31 (MRYNSFLSVLALFNVLLWFTFILAISMTFSA) is a signal peptide. The helical transmembrane segment at 52–74 (WFFVLLPYVIGLFFAIFDSATIG) threads the bilayer.

It is found in the membrane. This is an uncharacterized protein from Pasteurella multocida (strain Pm70).